The primary structure comprises 354 residues: Transcription factor HHO2 (354 aa).

The segment covering valine 93–glutamate 102 has biased composition (acidic residues). Residues valine 93–asparagine 112 form a disordered region. Over residues histidine 103–asparagine 112 the composition is skewed to basic and acidic residues. One can recognise an HTH myb-type domain in the interval threonine 212–arginine 272. A DNA-binding region (H-T-H motif) is located at residues proline 243–arginine 268. Residues valine 324 to serine 354 are disordered. The span at asparagine 337–serine 354 shows a compositional bias: low complexity.

It is found in the nucleus. Probable transcription factor involved in phosphate homeostasis. Involved in the regulation of the developmental response of lateral roots, acquisition and/or mobilization of phosphate and expression of a subset of genes involved in phosphate sensing and signaling pathway. Is a target of the transcription factor PHR1. This is Transcription factor HHO2 from Arabidopsis thaliana (Mouse-ear cress).